Here is a 1179-residue protein sequence, read N- to C-terminus: Putative ankyrin repeat protein RF_0381 (1179 aa).

18 ANK repeats span residues 282–311, 604–633, 637–666, 670–699, 703–732, 736–765, 769–798, 802–831, 833–860, 864–893, 897–926, 930–959, 963–992, 996–1025, 1029–1058, 1062–1091, 1095–1124, and 1128–1157; these read NGYQ…MHRQ, NKDQ…NPNA, HGVI…DVNA, NGET…NIHA, NGET…DVNA, NGLT…DVNA, SGET…DVNA, NGET…NVNN, KTIL…DIHA, SGET…DIHA, SGET…DINT, DGLT…DVNA, and SGET…DINL.

This Rickettsia felis (strain ATCC VR-1525 / URRWXCal2) (Rickettsia azadi) protein is Putative ankyrin repeat protein RF_0381.